The sequence spans 365 residues: tRNA/tmRNA (uracil-C(5))-methyltransferase (365 aa).

Residues glutamine 189, tyrosine 217, asparagine 222, glutamate 238, and aspartate 298 each contribute to the S-adenosyl-L-methionine site. Cysteine 323 serves as the catalytic Nucleophile. The active-site Proton acceptor is glutamate 357.

The protein belongs to the class I-like SAM-binding methyltransferase superfamily. RNA M5U methyltransferase family. TrmA subfamily.

The catalysed reaction is uridine(54) in tRNA + S-adenosyl-L-methionine = 5-methyluridine(54) in tRNA + S-adenosyl-L-homocysteine + H(+). It carries out the reaction uridine(341) in tmRNA + S-adenosyl-L-methionine = 5-methyluridine(341) in tmRNA + S-adenosyl-L-homocysteine + H(+). Functionally, dual-specificity methyltransferase that catalyzes the formation of 5-methyluridine at position 54 (m5U54) in all tRNAs, and that of position 341 (m5U341) in tmRNA (transfer-mRNA). The protein is tRNA/tmRNA (uracil-C(5))-methyltransferase of Shewanella sp. (strain MR-4).